Here is a 156-residue protein sequence, read N- to C-terminus: MAKVESFTLDHTAVKAPYVRLITVETGAKGDKISNFDLRFVQPNENAIPTAGLHTIEHMLAGYLRDHMDGVIDCSPFGCRTGFHLIMWGEHDTTEVATALKASLNDIINASWEDVQGTDIKSCGNYRDHSLFSAQEWCKKILADGISTDPFERKVI.

The Fe cation site is built by His-54, His-58, and Cys-123.

Belongs to the LuxS family. As to quaternary structure, homodimer. It depends on Fe cation as a cofactor.

The catalysed reaction is S-(5-deoxy-D-ribos-5-yl)-L-homocysteine = (S)-4,5-dihydroxypentane-2,3-dione + L-homocysteine. Involved in the synthesis of autoinducer 2 (AI-2) which is secreted by bacteria and is used to communicate both the cell density and the metabolic potential of the environment. The regulation of gene expression in response to changes in cell density is called quorum sensing. Catalyzes the transformation of S-ribosylhomocysteine (RHC) to homocysteine (HC) and 4,5-dihydroxy-2,3-pentadione (DPD). The protein is S-ribosylhomocysteine lyase of Ligilactobacillus salivarius (strain UCC118) (Lactobacillus salivarius).